Consider the following 541-residue polypeptide: ATP synthase subunit alpha (541 aa).

ATP is bound at residue 173–180 (GDRQTGKT). A compositionally biased stretch (basic and acidic residues) spans 517–527 (GIEPGVEEHES). The disordered stretch occupies residues 517-541 (GIEPGVEEHESLGATAVNQETIVKK). Polar residues predominate over residues 532–541 (AVNQETIVKK).

This sequence belongs to the ATPase alpha/beta chains family. As to quaternary structure, F-type ATPases have 2 components, CF(1) - the catalytic core - and CF(0) - the membrane proton channel. CF(1) has five subunits: alpha(3), beta(3), gamma(1), delta(1), epsilon(1). CF(0) has three main subunits: a(1), b(2) and c(9-12). The alpha and beta chains form an alternating ring which encloses part of the gamma chain. CF(1) is attached to CF(0) by a central stalk formed by the gamma and epsilon chains, while a peripheral stalk is formed by the delta and b chains.

It is found in the cell membrane. The catalysed reaction is ATP + H2O + 4 H(+)(in) = ADP + phosphate + 5 H(+)(out). Functionally, produces ATP from ADP in the presence of a proton gradient across the membrane. The alpha chain is a regulatory subunit. In Kocuria rhizophila (strain ATCC 9341 / DSM 348 / NBRC 103217 / DC2201), this protein is ATP synthase subunit alpha.